A 561-amino-acid polypeptide reads, in one-letter code: uncharacterized protein (561 aa).

A compositionally biased stretch (low complexity) spans 314-323 (ANNGSGDSSS). Residues 314–366 (ANNGSGDSSSTALNNESPNTTPKSRTFFSPKGHRRNSSHVSSLTSRSTKKPIT) form a disordered region. Positions 324–340 (TALNNESPNTTPKSRTF) are enriched in polar residues. Ser514 carries the post-translational modification Phosphoserine.

Its subcellular location is the cytoplasm. This is an uncharacterized protein from Saccharomyces cerevisiae (strain ATCC 204508 / S288c) (Baker's yeast).